A 468-amino-acid chain; its full sequence is Peroxisome proliferator-activated receptor alpha (468 aa).

The nuclear receptor DNA-binding region spans 99–173 (NIECRICGDK…VGMSHNAIRF (75 aa)). 2 NR C4-type zinc fingers span residues 102-122 (CRIC…CEGC) and 139-161 (CDRS…FHKC). One can recognise an NR LBD domain in the interval 239–466 (FVIHDMETLC…HPLLQEIYRD (228 aa)). The required for heterodimerization with RXRA stretch occupies residues 304–433 (DQVTLLKYGV…PKLLQKMVDL (130 aa)).

This sequence belongs to the nuclear hormone receptor family. NR1 subfamily. As to quaternary structure, heterodimer; with RXRA. This heterodimerization is required for DNA binding and transactivation activity. Interacts with NCOA3 coactivator. Interacts with CITED2; the interaction stimulates its transcriptional activity. Also interacts with PPARBP in vitro. Interacts with AKAP13, LPIN1, PRDM16 and coactivator NCOA6. Interacts with ASXL1 and ASXL2. Interacts with PER2. Interacts with SIRT1; the interaction seems to be modulated by NAD(+) levels. Interacts with CRY1 and CRY2. In hepatocytes, interacts with PAQR3 and HUWE1; the interactions promote PPARA poylubiquitination and HUWE1-mediated degradation. In terms of processing, ubiquitinated by E3 ubiquitin-protein ligase HUWE1; leading to proteasomal degradation. Post-translationally, phosphorylated. In terms of tissue distribution, highly expressed in liver, kidney and heart. Very weakly expressed in brain and testis.

Its subcellular location is the nucleus. In terms of biological role, ligand-activated transcription factor. Key regulator of lipid metabolism. Activated by the endogenous ligand 1-palmitoyl-2-oleoyl-sn-glycerol-3-phosphocholine (16:0/18:1-GPC). Activated by oleylethanolamide, a naturally occurring lipid that regulates satiety. Receptor for peroxisome proliferators such as hypolipidemic drugs and fatty acids. Regulates the peroxisomal beta-oxidation pathway of fatty acids. Functions as a transcription activator for the ACOX1 and P450 genes. Transactivation activity requires heterodimerization with RXRA and is antagonized by NR2C2. May be required for the propagation of clock information to metabolic pathways regulated by PER2. The chain is Peroxisome proliferator-activated receptor alpha (Ppara) from Mus musculus (Mouse).